The sequence spans 418 residues: UDP-N-acetylglucosamine 1-carboxyvinyltransferase (418 aa).

Residue 22–23 participates in phosphoenolpyruvate binding; the sequence is KN. Arginine 93 contacts UDP-N-acetyl-alpha-D-glucosamine. Residue cysteine 117 is the Proton donor of the active site. At cysteine 117 the chain carries 2-(S-cysteinyl)pyruvic acid O-phosphothioketal. UDP-N-acetyl-alpha-D-glucosamine is bound by residues aspartate 305 and valine 327.

It belongs to the EPSP synthase family. MurA subfamily.

Its subcellular location is the cytoplasm. The catalysed reaction is phosphoenolpyruvate + UDP-N-acetyl-alpha-D-glucosamine = UDP-N-acetyl-3-O-(1-carboxyvinyl)-alpha-D-glucosamine + phosphate. The protein operates within cell wall biogenesis; peptidoglycan biosynthesis. Cell wall formation. Adds enolpyruvyl to UDP-N-acetylglucosamine. In Alkalilimnicola ehrlichii (strain ATCC BAA-1101 / DSM 17681 / MLHE-1), this protein is UDP-N-acetylglucosamine 1-carboxyvinyltransferase.